The following is a 436-amino-acid chain: 3-ketoacyl-CoA thiolase (436 aa).

Cys-99 serves as the catalytic Acyl-thioester intermediate. Residues His-392 and Cys-422 each act as proton acceptor in the active site.

This sequence belongs to the thiolase-like superfamily. Thiolase family. As to quaternary structure, heterotetramer of two alpha chains (FadJ) and two beta chains (FadI).

It localises to the cytoplasm. It carries out the reaction an acyl-CoA + acetyl-CoA = a 3-oxoacyl-CoA + CoA. The protein operates within lipid metabolism; fatty acid beta-oxidation. Its function is as follows. Catalyzes the final step of fatty acid oxidation in which acetyl-CoA is released and the CoA ester of a fatty acid two carbons shorter is formed. In Salmonella paratyphi A (strain ATCC 9150 / SARB42), this protein is 3-ketoacyl-CoA thiolase.